Consider the following 202-residue polypeptide: Inosine triphosphate pyrophosphatase (202 aa).

8–13 (TGNANK) contacts ITP. Residue E55 coordinates Mg(2+). Residues K67, 83 to 84 (DT), K100, 159 to 162 (FGWD), K182, and 187 to 188 (HR) contribute to the ITP site.

This sequence belongs to the HAM1 NTPase family. In terms of assembly, homodimer. It depends on Mg(2+) as a cofactor. Mn(2+) serves as cofactor.

The protein resides in the cytoplasm. The protein localises to the nucleus. It catalyses the reaction ITP + H2O = IMP + diphosphate + H(+). The catalysed reaction is dITP + H2O = dIMP + diphosphate + H(+). It carries out the reaction XTP + H2O = XMP + diphosphate + H(+). Functionally, pyrophosphatase that hydrolyzes non-canonical purine nucleotides such as inosine triphosphate (ITP), deoxyinosine triphosphate (dITP) or xanthosine 5'-triphosphate (XTP) to their respective monophosphate derivatives. The enzyme does not distinguish between the deoxy- and ribose forms. Probably excludes non-canonical purines from RNA and DNA precursor pools, thus preventing their incorporation into RNA and DNA and avoiding chromosomal lesions. This chain is Inosine triphosphate pyrophosphatase, found in Candida albicans (strain SC5314 / ATCC MYA-2876) (Yeast).